The sequence spans 229 residues: MFLVGLTGGIASGKSTVSSQLKELGCPVIDADVVARKVVEPQTAAYRLIVRHFGQEVLSENGEIDRKKLGQIIFSSPEKRRLLNSITHPEIHKEMLKQILLYFIKGYRYVILNVPLLFETRRLTRFLTHTVVVYCDPATQLSRLMQRDALSQTEAEQRISAQMPLKEKRGLANHVIENSGSREDTHRQVLRLHSKLDDCMQFLIIRAVAVAALTGLGGLFIYTVKIITS.

The DPCK domain maps to 3-207 (LVGLTGGIAS…DCMQFLIIRA (205 aa)). Position 8 to 15 (8 to 15 (GGIASGKS)) interacts with ATP.

It belongs to the CoaE family.

In Danio rerio (Zebrafish), this protein is Dephospho-CoA kinase domain-containing protein (dcakd).